A 285-amino-acid chain; its full sequence is (3S)-malyl-CoA thioesterase (285 aa).

Residues arginine 70 and glutamate 122 each contribute to the substrate site. Positions 122 and 148 each coordinate Mg(2+).

The protein belongs to the HpcH/HpaI aldolase family. In terms of assembly, homodimer or homotrimer. The cofactor is Mg(2+).

It carries out the reaction (S)-malyl-CoA + H2O = (S)-malate + CoA + H(+). In terms of biological role, catalyzes the hydrolysis of (3S)-malyl-CoA to (3S)-malate and free CoA. Inactive towards beta-methylmalyl-CoA and other CoA esters. In Cereibacter sphaeroides (strain ATCC 17029 / ATH 2.4.9) (Rhodobacter sphaeroides), this protein is (3S)-malyl-CoA thioesterase.